The primary structure comprises 278 residues: Protein lyl-1 (278 aa).

Positions 1-46 are disordered; the sequence is MCPPQARAEVGSAMTEKTEMVCASSPAPAPPSKPASPGPLSTEEVD. A compositionally biased stretch (pro residues) spans 27–37; the sequence is APAPPSKPASP. Positions 149–201 constitute a bHLH domain; sequence ARRVFTNSRERWRQQHVNGAFAELRKLLPTHPPDRKLSKNEVLRLAMKYIGFL. The tract at residues 212 to 278 is disordered; it reads LTSGPSAPGS…EQTSLSPEVR (67 aa). Over residues 269-278 the composition is skewed to polar residues; that stretch reads EQTSLSPEVR. Serine 274 carries the phosphoserine modification.

As to quaternary structure, efficient DNA binding requires dimerization with another bHLH protein.

It is found in the nucleus. The polypeptide is Protein lyl-1 (Lyl1) (Mus musculus (Mouse)).